The chain runs to 112 residues: Protein FAM32A (112 aa).

The segment at 23-56 (TKRKKKKKDKDKAKMLEAMGTSKKSEEEKRRCLD) is disordered. A compositionally biased stretch (basic and acidic residues) spans 45–56 (KKSEEEKRRCLD).

Belongs to the FAM32 family. As to expression, widely expressed, with highest level in pancreas and lowest in muscle.

It is found in the nucleus. Functionally, may induce G2 arrest and apoptosis. May also increase cell sensitivity to apoptotic stimuli. In cell lines, may play a role in the inhibition of anchor-independent cell growth. This chain is Protein FAM32A (Fam32a), found in Mus musculus (Mouse).